The chain runs to 266 residues: Hydroxyethylthiazole kinase (266 aa).

Methionine 45 contacts substrate. The ATP site is built by lysine 121 and serine 167. Position 194 (glycine 194) interacts with substrate.

Belongs to the Thz kinase family. The cofactor is Mg(2+).

It carries out the reaction 5-(2-hydroxyethyl)-4-methylthiazole + ATP = 4-methyl-5-(2-phosphooxyethyl)-thiazole + ADP + H(+). It functions in the pathway cofactor biosynthesis; thiamine diphosphate biosynthesis; 4-methyl-5-(2-phosphoethyl)-thiazole from 5-(2-hydroxyethyl)-4-methylthiazole: step 1/1. Its function is as follows. Catalyzes the phosphorylation of the hydroxyl group of 4-methyl-5-beta-hydroxyethylthiazole (THZ). The polypeptide is Hydroxyethylthiazole kinase (Methanocella arvoryzae (strain DSM 22066 / NBRC 105507 / MRE50)).